Consider the following 278-residue polypeptide: Non-heme chloroperoxidase (278 aa).

The region spanning 26 to 264 (PVVLIHGFPL…GAPHGLLWTH (239 aa)) is the AB hydrolase-1 domain. Catalysis depends on residues serine 99, aspartate 229, and histidine 258.

Belongs to the AB hydrolase superfamily. Bacterial non-heme haloperoxidase / perhydrolase family. In terms of assembly, homodimer.

This Kitasatospora aureofaciens (Streptomyces aureofaciens) protein is Non-heme chloroperoxidase (cpo).